Here is a 235-residue protein sequence, read N- to C-terminus: Elongation factor Tu, chloroplastic (235 aa).

The tr-type G domain occupies 1–125 (KNMITGAAQM…EVDNYIPLPT (125 aa)). 47 to 50 (NKAD) is a binding site for GTP.

Belongs to the TRAFAC class translation factor GTPase superfamily. Classic translation factor GTPase family. EF-Tu/EF-1A subfamily.

The protein resides in the plastid. It is found in the chloroplast. The catalysed reaction is GTP + H2O = GDP + phosphate + H(+). Functionally, GTP hydrolase that promotes the GTP-dependent binding of aminoacyl-tRNA to the A-site of ribosomes during protein biosynthesis. This is Elongation factor Tu, chloroplastic (tufA) from Bryopsis plumosa (Green alga).